Consider the following 338-residue polypeptide: Ketol-acid reductoisomerase (NADP(+)) (338 aa).

Residues 1–181 form the KARI N-terminal Rossmann domain; that stretch reads MKVFYDKDAD…GGGRAGIIET (181 aa). Residues 24-27, arginine 47, and serine 52 each bind NADP(+); that span reads YGSQ. The active site involves histidine 107. Glycine 133 serves as a coordination point for NADP(+). Positions 182–327 constitute a KARI C-terminal knotted domain; the sequence is NFREETETDL…AKLRAMMPWI (146 aa). The Mg(2+) site is built by aspartate 190, glutamate 194, glutamate 226, and glutamate 230. Serine 251 contacts substrate.

It belongs to the ketol-acid reductoisomerase family. The cofactor is Mg(2+).

The catalysed reaction is (2R)-2,3-dihydroxy-3-methylbutanoate + NADP(+) = (2S)-2-acetolactate + NADPH + H(+). It catalyses the reaction (2R,3R)-2,3-dihydroxy-3-methylpentanoate + NADP(+) = (S)-2-ethyl-2-hydroxy-3-oxobutanoate + NADPH + H(+). Its pathway is amino-acid biosynthesis; L-isoleucine biosynthesis; L-isoleucine from 2-oxobutanoate: step 2/4. It participates in amino-acid biosynthesis; L-valine biosynthesis; L-valine from pyruvate: step 2/4. In terms of biological role, involved in the biosynthesis of branched-chain amino acids (BCAA). Catalyzes an alkyl-migration followed by a ketol-acid reduction of (S)-2-acetolactate (S2AL) to yield (R)-2,3-dihydroxy-isovalerate. In the isomerase reaction, S2AL is rearranged via a Mg-dependent methyl migration to produce 3-hydroxy-3-methyl-2-ketobutyrate (HMKB). In the reductase reaction, this 2-ketoacid undergoes a metal-dependent reduction by NADPH to yield (R)-2,3-dihydroxy-isovalerate. The chain is Ketol-acid reductoisomerase (NADP(+)) from Cupriavidus necator (strain ATCC 17699 / DSM 428 / KCTC 22496 / NCIMB 10442 / H16 / Stanier 337) (Ralstonia eutropha).